Consider the following 174-residue polypeptide: Guided entry of tail-anchored proteins factor 1 (174 aa).

Topologically, residues 1–8 are lumenal; the sequence is MSAAEADR. Residues 9-29 traverse the membrane as a helical segment; that stretch reads WAWLLVLSFVFGCNVLRILLP. Over 30 to 99 the chain is Cytoplasmic; that stretch reads SFSFFMSRVL…VKARTAQLAK (70 aa). Positions 39-94 form a coiled coil; the sequence is LQKDAEQESQMRAEIQGMKQELSTVNMMDEFARYARLERKINKMTDKLKTHVKART. Residues 39 to 97 form an interaction with GET3/TRC40 region; that stretch reads LQKDAEQESQMRAEIQGMKQELSTVNMMDEFARYARLERKINKMTDKLKTHVKARTAQL. Residues 100–120 traverse the membrane as a helical segment; the sequence is IKWVISVAFYILQAALMVSLI. Over 121 to 148 the chain is Lumenal; that stretch reads WKYYSVPVAVVPSKWITPLDRLVAFPTR. The helical transmembrane segment at 149-169 threads the bilayer; that stretch reads VAGGVGITCWILVCNKVVAIV. Topologically, residues 170–174 are cytoplasmic; sequence LHPFS.

This sequence belongs to the WRB/GET1 family. As to quaternary structure, component of the Golgi to ER traffic (GET) complex, which is composed of GET1/WRB, CAMLG/GET2 and GET3. Within the complex, GET1 and CAMLG form a heterotetramer which is stabilized by phosphatidylinositol binding and which binds to the GET3 homodimer. Interacts with CAMLG (via C-terminus). GET3 shows a higher affinity for CAMLG than for GET1.

It localises to the endoplasmic reticulum membrane. In terms of biological role, required for the post-translational delivery of tail-anchored (TA) proteins to the endoplasmic reticulum. Together with CAMLG/GET2, acts as a membrane receptor for soluble GET3/TRC40, which recognizes and selectively binds the transmembrane domain of TA proteins in the cytosol. Required to ensure correct topology and ER insertion of CAMLG. This Bos taurus (Bovine) protein is Guided entry of tail-anchored proteins factor 1.